The sequence spans 131 residues: Holo-[acyl-carrier-protein] synthase (131 aa).

Mg(2+)-binding residues include aspartate 8 and glutamate 62.

The protein belongs to the P-Pant transferase superfamily. AcpS family. The cofactor is Mg(2+).

It is found in the cytoplasm. It catalyses the reaction apo-[ACP] + CoA = holo-[ACP] + adenosine 3',5'-bisphosphate + H(+). Functionally, transfers the 4'-phosphopantetheine moiety from coenzyme A to a Ser of acyl-carrier-protein. The chain is Holo-[acyl-carrier-protein] synthase from Delftia acidovorans (strain DSM 14801 / SPH-1).